The chain runs to 102 residues: ATP-dependent Clp protease adapter protein ClpS (102 aa).

Belongs to the ClpS family. In terms of assembly, binds to the N-terminal domain of the chaperone ClpA.

In terms of biological role, involved in the modulation of the specificity of the ClpAP-mediated ATP-dependent protein degradation. The polypeptide is ATP-dependent Clp protease adapter protein ClpS (Shewanella piezotolerans (strain WP3 / JCM 13877)).